We begin with the raw amino-acid sequence, 469 residues long: 3-isopropylmalate dehydratase large subunit (469 aa).

Residues Cys347, Cys408, and Cys411 each coordinate [4Fe-4S] cluster.

Belongs to the aconitase/IPM isomerase family. LeuC type 1 subfamily. Heterodimer of LeuC and LeuD. [4Fe-4S] cluster serves as cofactor.

It catalyses the reaction (2R,3S)-3-isopropylmalate = (2S)-2-isopropylmalate. The protein operates within amino-acid biosynthesis; L-leucine biosynthesis; L-leucine from 3-methyl-2-oxobutanoate: step 2/4. Functionally, catalyzes the isomerization between 2-isopropylmalate and 3-isopropylmalate, via the formation of 2-isopropylmaleate. The chain is 3-isopropylmalate dehydratase large subunit from Actinobacillus succinogenes (strain ATCC 55618 / DSM 22257 / CCUG 43843 / 130Z).